The sequence spans 101 residues: Urease subunit beta (101 aa).

Belongs to the urease beta subunit family. Heterotrimer of UreA (gamma), UreB (beta) and UreC (alpha) subunits. Three heterotrimers associate to form the active enzyme.

The protein resides in the cytoplasm. The enzyme catalyses urea + 2 H2O + H(+) = hydrogencarbonate + 2 NH4(+). It functions in the pathway nitrogen metabolism; urea degradation; CO(2) and NH(3) from urea (urease route): step 1/1. In Thermosynechococcus vestitus (strain NIES-2133 / IAM M-273 / BP-1), this protein is Urease subunit beta.